The sequence spans 117 residues: Large ribosomal subunit protein uL18 (117 aa).

This sequence belongs to the universal ribosomal protein uL18 family. In terms of assembly, part of the 50S ribosomal subunit; part of the 5S rRNA/L5/L18/L25 subcomplex. Contacts the 5S and 23S rRNAs.

Functionally, this is one of the proteins that bind and probably mediate the attachment of the 5S RNA into the large ribosomal subunit, where it forms part of the central protuberance. In Vibrio cholerae serotype O1 (strain ATCC 39541 / Classical Ogawa 395 / O395), this protein is Large ribosomal subunit protein uL18.